The following is a 239-amino-acid chain: Ribosomal RNA small subunit methyltransferase G (239 aa).

S-adenosyl-L-methionine-binding positions include glycine 79, phenylalanine 84, 130–131 (AE), and arginine 149. A disordered region spans residues 218-239 (KKTKTPKKYPRQAGTPSKKPIS).

This sequence belongs to the methyltransferase superfamily. RNA methyltransferase RsmG family.

The protein resides in the cytoplasm. Its function is as follows. Specifically methylates the N7 position of a guanine in 16S rRNA. This is Ribosomal RNA small subunit methyltransferase G from Leuconostoc mesenteroides subsp. mesenteroides (strain ATCC 8293 / DSM 20343 / BCRC 11652 / CCM 1803 / JCM 6124 / NCDO 523 / NBRC 100496 / NCIMB 8023 / NCTC 12954 / NRRL B-1118 / 37Y).